The sequence spans 27 residues: Nucleoside diphosphate kinase 2 (27 aa).

Lys3 is a binding site for ATP.

This sequence belongs to the NDK family. Requires Mg(2+) as cofactor.

It carries out the reaction a 2'-deoxyribonucleoside 5'-diphosphate + ATP = a 2'-deoxyribonucleoside 5'-triphosphate + ADP. The enzyme catalyses a ribonucleoside 5'-diphosphate + ATP = a ribonucleoside 5'-triphosphate + ADP. Its function is as follows. Major role in the synthesis of nucleoside triphosphates other than ATP. The ATP gamma phosphate is transferred to the NDP beta phosphate via a ping-pong mechanism, using a phosphorylated active-site intermediate. In Pseudotsuga menziesii (Douglas-fir), this protein is Nucleoside diphosphate kinase 2.